Reading from the N-terminus, the 1286-residue chain is Protein patched (1286 aa).

Topologically, residues 1-76 (MDRDSLPRVP…GSSVQKHAGK (76 aa)) are cytoplasmic. Residues 77 to 92 (VLFVAILVLSTFCVGL) form a helical membrane-spanning segment. The Extracellular portion of the chain corresponds to 93–427 (KSAQIHSKVH…DDILAKFSHP (335 aa)). Residues N142, N298, N335, and N388 are each glycosylated (N-linked (GlcNAc...) asparagine). A helical transmembrane segment spans residues 428–448 (SALSIVIGVAVTVLYAFCTLL). The SSD domain occupies 428 to 583 (SALSIVIGVA…LLVFPAMISL (156 aa)). The Cytoplasmic portion of the chain corresponds to 449–465 (RWRDPVRGQSSVGVAGV). A helical membrane pass occupies residues 466-486 (LLMCFSTAAGLGLSALLGIVF). Residues 487–492 (NAASTQ) are Extracellular-facing. A helical membrane pass occupies residues 493 to 511 (VVPFLALGLGVDHIFMLTA). Residues 512-532 (AYAESNRREQTKLILKKVGPS) are Cytoplasmic-facing. Residues 533-553 (ILFSACSTAGSFFAAAFIPVP) form a helical membrane-spanning segment. Residues 554–562 (ALKVFCLQA) are Extracellular-facing. The chain crosses the membrane as a helical span at residues 563–583 (AIVMCSNLAAALLVFPAMISL). Topologically, residues 584-677 (DLRRRTAGRA…QHYTPFLMRS (94 aa)) are cytoplasmic. The helical transmembrane segment at 678-699 (WVKFLTVMGFLAALISSLYAST) threads the bilayer. The Extracellular segment spans residues 700-931 (RLQDGLDIID…IRDLSVKYEG (232 aa)). N807 is a glycosylation site (N-linked (GlcNAc...) asparagine). Residues 932–952 (FGLPNYPSGIPFIFWEQYMTL) form a helical membrane-spanning segment. Over 953 to 955 (RSS) the chain is Cytoplasmic. The helical transmembrane segment at 956-976 (LAMILACVLLAALVLVSLLLL) threads the bilayer. At 977–1007 (SVWAAVLVILSVLASLAQIFGAMTLLGIKLS) the chain is on the extracellular side. Residues 1008-1028 (AIPAVILILSVGMMLCFNVLI) traverse the membrane as a helical segment. The Cytoplasmic portion of the chain corresponds to 1029–1056 (SLGFMTSVGNRQRRVQLSMQMSLGPLVH). The chain crosses the membrane as a helical span at residues 1057–1077 (GMLTSGVAVFMLSTSPFEFVI). The Extracellular portion of the chain corresponds to 1078-1082 (RHFCW). Residues 1083–1103 (LLLVVLCVGACNSLLVFPILL) traverse the membrane as a helical segment. At 1104–1286 (SMVGPEAELV…RAVRSYNFTS (183 aa)) the chain is on the cytoplasmic side. Residues 1116-1237 (EHPDRISTPS…PPPFPTAYPP (122 aa)) are disordered. Composition is skewed to polar residues over residues 1141 to 1152 (VQGSRSSRGSCQ) and 1165 to 1191 (PSLT…NDWT). The span at 1199–1216 (PASYAAPPPAYHKAAAQQ) shows a compositional bias: low complexity. Residues 1224–1235 (PTTPPPPFPTAY) are compositionally biased toward pro residues.

This sequence belongs to the patched family. In terms of assembly, interacts (via C-terminal cytoplasmic region) with CG5504/l(2)tid; the interaction is probably direct. Interacts with hh/hedgehog.

It localises to the membrane. Its function is as follows. Segmentation polarity protein. Acts as a receptor for the hedgehog protein (hh). Associates with the smoothened protein (SMO) to transduce the hedgehog signal leading to the activation of wingless, decapentaplegic and patched itself. Participates in cell interactions that establish pattern within the segment and the imaginal disks during development. In the absence of HH, represses the constitutive signaling activity of smo through fused (FU). The protein is Protein patched of Drosophila melanogaster (Fruit fly).